A 290-amino-acid polypeptide reads, in one-letter code: 3-deoxy-manno-octulosonate cytidylyltransferase, mitochondrial (290 aa).

The N-terminal 50 residues, M1 to P50, are a transit peptide targeting the mitochondrion.

The protein belongs to the KdsB family. Mg(2+) serves as cofactor. In terms of tissue distribution, expressed in roots, leaves, stems and siliques.

The protein resides in the mitochondrion outer membrane. The enzyme catalyses 3-deoxy-alpha-D-manno-oct-2-ulosonate + CTP = CMP-3-deoxy-beta-D-manno-octulosonate + diphosphate. The protein operates within nucleotide-sugar biosynthesis; CMP-3-deoxy-D-manno-octulosonate biosynthesis; CMP-3-deoxy-D-manno-octulosonate from 3-deoxy-D-manno-octulosonate and CTP: step 1/1. With respect to regulation, inhibited by 2beta-deoxy-Kdo. Functionally, catalyzes the production of the sugar nucleotide CMP-3-deoxy-D-manno-octulosonate (CMP-KDO). CTP is the preferred nucleotide donor, but it can partially be replaced with UTP. Activates KDO during the biosynthesis of rhamnogalacturonan II (RG-II), a structurally complex pectic polysaccharide of the primary cell wall. RG-II is essential for the cell wall integrity of rapidly growing tissues and pollen tube growth and elongation. The chain is 3-deoxy-manno-octulosonate cytidylyltransferase, mitochondrial from Arabidopsis thaliana (Mouse-ear cress).